The following is a 571-amino-acid chain: Gag-Pro polyprotein (571 aa).

The N-myristoyl glycine; by host moiety is linked to residue Gly2. Positions 100-103 (PPPY) match the PPXY motif motif. Repeats lie at residues 342–362 (PPPGPCYRCLKEGHWARDCPT) and 367–387 (PPPGPCPICKDPSHWKRDCPT). CCHC-type zinc fingers lie at residues 345-362 (GPCYRCLKEGHWARDCPT) and 370-387 (GPCPICKDPSHWKRDCPT). In terms of domain architecture, Peptidase A2 spans 447–525 (ALMLVDTGAE…DKWQILGRDV (79 aa)). The Protease; shared with dimeric partner role is filled by Asp452.

Homodimer; the homodimers are part of the immature particles. Interacts with human TSG101 and NEDD4; these interactions are essential for budding and release of viral particles. In terms of assembly, homodimer; further assembles as homohexamers. Post-translationally, specific enzymatic cleavages by the viral protease yield mature proteins. The polyprotein is cleaved during and after budding, this process is termed maturation. The protease is autoproteolytically processed at its N- and C-termini. In terms of processing, gag polyprotein: Myristoylated. Myristoylation of the matrix (MA) domain mediates the transport and binding of Gag polyproteins to the host plasma membrane and is required for the assembly of viral particles.

The protein localises to the virion. Functionally, the matrix domain targets Gag, Gag-Pro and Gag-Pro-Pol polyproteins to the plasma membrane via a multipartite membrane binding signal, that includes its myristoylated N-terminus. Its function is as follows. Matrix protein. In terms of biological role, forms the spherical core of the virus that encapsulates the genomic RNA-nucleocapsid complex. Binds strongly to viral nucleic acids and promote their aggregation. Also destabilizes the nucleic acids duplexes via highly structured zinc-binding motifs. Functionally, the aspartyl protease mediates proteolytic cleavages of Gag and Gag-Pol polyproteins during or shortly after the release of the virion from the plasma membrane. Cleavages take place as an ordered, step-wise cascade to yield mature proteins. This process is called maturation. Displays maximal activity during the budding process just prior to particle release from the cell. This Bos taurus (Bovine) protein is Gag-Pro polyprotein.